A 508-amino-acid chain; its full sequence is Photosystem II CP47 reaction center protein (508 aa).

The next 6 helical transmembrane spans lie at 21–36, 101–115, 140–156, 203–218, 237–252, and 457–472; these read AVHIMHTALVAGWAGS, IVFSGLCFLAAIWHW, GIHLFLSGVACFGFGAF, IAAGTLGILAGLFHLS, VLSSSIAAVFFAAFVV, and SFALLFFFGHIWHGAR.

The protein belongs to the PsbB/PsbC family. PsbB subfamily. In terms of assembly, PSII is composed of 1 copy each of membrane proteins PsbA, PsbB, PsbC, PsbD, PsbE, PsbF, PsbH, PsbI, PsbJ, PsbK, PsbL, PsbM, PsbT, PsbX, PsbY, PsbZ, Psb30/Ycf12, at least 3 peripheral proteins of the oxygen-evolving complex and a large number of cofactors. It forms dimeric complexes. Interacts with PAM68. Interacts with HHL1. It depends on Binds multiple chlorophylls. PSII binds additional chlorophylls, carotenoids and specific lipids. as a cofactor.

The protein localises to the plastid. It localises to the chloroplast thylakoid membrane. In terms of biological role, one of the components of the core complex of photosystem II (PSII). It binds chlorophyll and helps catalyze the primary light-induced photochemical processes of PSII. PSII is a light-driven water:plastoquinone oxidoreductase, using light energy to abstract electrons from H(2)O, generating O(2) and a proton gradient subsequently used for ATP formation. The protein is Photosystem II CP47 reaction center protein of Arabidopsis thaliana (Mouse-ear cress).